We begin with the raw amino-acid sequence, 78 residues long: Small ribosomal subunit protein bS18 (78 aa).

Belongs to the bacterial ribosomal protein bS18 family. In terms of assembly, part of the 30S ribosomal subunit. Forms a tight heterodimer with protein bS6.

Its function is as follows. Binds as a heterodimer with protein bS6 to the central domain of the 16S rRNA, where it helps stabilize the platform of the 30S subunit. The sequence is that of Small ribosomal subunit protein bS18 from Lacticaseibacillus casei (strain BL23) (Lactobacillus casei).